The sequence spans 176 residues: RNA pyrophosphohydrolase (176 aa).

A Nudix hydrolase domain is found at 6-149 (GYRPNVGIVI…KRDVYRRVMK (144 aa)). Residues 38–59 (GGINPGESAEQAMYRELFEEVG) carry the Nudix box motif.

This sequence belongs to the Nudix hydrolase family. RppH subfamily. It depends on a divalent metal cation as a cofactor.

Its function is as follows. Accelerates the degradation of transcripts by removing pyrophosphate from the 5'-end of triphosphorylated RNA, leading to a more labile monophosphorylated state that can stimulate subsequent ribonuclease cleavage. This chain is RNA pyrophosphohydrolase, found in Shigella boydii serotype 18 (strain CDC 3083-94 / BS512).